A 701-amino-acid chain; its full sequence is Low-density lipoprotein receptor-related protein 12 (701 aa).

The Extracellular portion of the chain corresponds to glycine 1–arginine 334. 2 consecutive LDL-receptor class A domains span residues asparagine 7–alanine 43 and proline 56–aspartate 97. Disulfide bonds link cysteine 8–cysteine 20, cysteine 15–cysteine 33, cysteine 27–cysteine 42, cysteine 57–cysteine 74, cysteine 64–cysteine 87, cysteine 81–cysteine 96, and cysteine 101–cysteine 127. The region spanning cysteine 101–aspartate 214 is the CUB domain. Residues asparagine 126 and asparagine 208 are each glycosylated (N-linked (GlcNAc...) asparagine). 3 LDL-receptor class A domains span residues phenylalanine 216 to threonine 253, methionine 254 to phenylalanine 291, and phenylalanine 292 to proline 328. Intrachain disulfides connect cysteine 217–cysteine 230, cysteine 224–cysteine 243, cysteine 237–cysteine 252, cysteine 255–cysteine 268, cysteine 262–cysteine 281, cysteine 275–cysteine 290, cysteine 293–cysteine 305, cysteine 300–cysteine 318, and cysteine 312–cysteine 327. Asparagine 251 carries N-linked (GlcNAc...) asparagine glycosylation. The N-linked (GlcNAc...) asparagine glycan is linked to asparagine 283. Residues valine 335–glycine 355 traverse the membrane as a helical segment. At cysteine 356–cysteine 701 the chain is on the cytoplasmic side. Disordered stretches follow at residues alanine 465–lysine 520, alanine 535–arginine 565, serine 590–aspartate 612, and aspartate 643–aspartate 665. Polar residues-rich tracts occupy residues serine 590 to leucine 599 and aspartate 643 to asparagine 656.

It belongs to the LDLR family. In terms of assembly, may interact with RACK1, ZFYVE9 and NMRK2.

The protein resides in the membrane. The protein localises to the coated pit. Functionally, probable receptor, which may be involved in the internalization of lipophilic molecules and/or signal transduction. May act as a tumor suppressor. This chain is Low-density lipoprotein receptor-related protein 12 (LRP12), found in Macaca fascicularis (Crab-eating macaque).